The primary structure comprises 222 residues: Thiol:disulfide interchange protein DsbL (222 aa).

The N-terminal stretch at 1 to 27 is a signal peptide; it reads MSKLGISSLFKTILLTAALAVSFTASA. A Thioredoxin domain is found at 28-221; sequence FTEGTDYMVL…MADLIRELAS (194 aa). A disulfide bond links cysteine 56 and cysteine 59.

It belongs to the thioredoxin family. DsbL subfamily. In terms of assembly, interacts with DsbI.

Its subcellular location is the periplasm. In terms of biological role, involved in disulfide-bond formation. Acts by transferring its disulfide bond to other proteins. Part of a redox system composed of DsbI and DsbL that mediates formation of an essential disulfide bond in AssT. In Escherichia coli O6:H1 (strain CFT073 / ATCC 700928 / UPEC), this protein is Thiol:disulfide interchange protein DsbL.